Here is a 164-residue protein sequence, read N- to C-terminus: Phosphopantetheine adenylyltransferase (164 aa).

Position 10 (Ser-10) interacts with substrate. ATP contacts are provided by residues 10–11 and His-18; that span reads SF. 3 residues coordinate substrate: Lys-42, Met-74, and Arg-88. ATP contacts are provided by residues 89 to 91, Glu-99, and 124 to 130; these read GLR and YFFVSAR.

It belongs to the bacterial CoaD family. Homohexamer. It depends on Mg(2+) as a cofactor.

It is found in the cytoplasm. It carries out the reaction (R)-4'-phosphopantetheine + ATP + H(+) = 3'-dephospho-CoA + diphosphate. It functions in the pathway cofactor biosynthesis; coenzyme A biosynthesis; CoA from (R)-pantothenate: step 4/5. In terms of biological role, reversibly transfers an adenylyl group from ATP to 4'-phosphopantetheine, yielding dephospho-CoA (dPCoA) and pyrophosphate. This is Phosphopantetheine adenylyltransferase from Anaeromyxobacter dehalogenans (strain 2CP-1 / ATCC BAA-258).